The chain runs to 177 residues: Large ribosomal subunit protein uL6 (177 aa).

The protein belongs to the universal ribosomal protein uL6 family. Part of the 50S ribosomal subunit.

In terms of biological role, this protein binds to the 23S rRNA, and is important in its secondary structure. It is located near the subunit interface in the base of the L7/L12 stalk, and near the tRNA binding site of the peptidyltransferase center. This Rickettsia canadensis (strain McKiel) protein is Large ribosomal subunit protein uL6.